The following is a 252-amino-acid chain: 5-oxoprolinase subunit A (252 aa).

This sequence belongs to the LamB/PxpA family. In terms of assembly, forms a complex composed of PxpA, PxpB and PxpC.

The enzyme catalyses 5-oxo-L-proline + ATP + 2 H2O = L-glutamate + ADP + phosphate + H(+). Its function is as follows. Catalyzes the cleavage of 5-oxoproline to form L-glutamate coupled to the hydrolysis of ATP to ADP and inorganic phosphate. This is 5-oxoprolinase subunit A from Bordetella pertussis (strain Tohama I / ATCC BAA-589 / NCTC 13251).